The following is a 279-amino-acid chain: Putative phosphoenolpyruvate synthase regulatory protein (279 aa).

Residue 159-166 participates in ADP binding; sequence GVSRSGKT.

The protein belongs to the pyruvate, phosphate/water dikinase regulatory protein family. PSRP subfamily.

It carries out the reaction [pyruvate, water dikinase] + ADP = [pyruvate, water dikinase]-phosphate + AMP + H(+). The enzyme catalyses [pyruvate, water dikinase]-phosphate + phosphate + H(+) = [pyruvate, water dikinase] + diphosphate. In terms of biological role, bifunctional serine/threonine kinase and phosphorylase involved in the regulation of the phosphoenolpyruvate synthase (PEPS) by catalyzing its phosphorylation/dephosphorylation. This is Putative phosphoenolpyruvate synthase regulatory protein from Ralstonia nicotianae (strain ATCC BAA-1114 / GMI1000) (Ralstonia solanacearum).